The chain runs to 376 residues: Transcriptional regulator STP4 (376 aa).

3 disordered regions span residues 25–58, 89–122, and 137–210; these read QNYC…PHAS, SSNS…SNSS, and VNCI…NWKP. 2 stretches are compositionally biased toward low complexity: residues 32-50 and 89-103; these read SPSP…TSPP and SSNS…YSPT. 2 stretches are compositionally biased toward polar residues: residues 146–183 and 191–200; these read PRST…LSVK and EPQNSNTIIS. The C2H2-type zinc finger occupies 241 to 263; the sequence is HICKYCERGFARPNDLFRHVKCH.

It localises to the nucleus. Functionally, probable transcription factor involved in response to cell wall damage. The protein is Transcriptional regulator STP4 (STP4) of Candida albicans (strain SC5314 / ATCC MYA-2876) (Yeast).